We begin with the raw amino-acid sequence, 145 residues long: D-aminoacyl-tRNA deacylase (145 aa).

Positions 137–138 match the Gly-cisPro motif, important for rejection of L-amino acids motif; the sequence is GP.

The protein belongs to the DTD family. In terms of assembly, homodimer.

Its subcellular location is the cytoplasm. The catalysed reaction is glycyl-tRNA(Ala) + H2O = tRNA(Ala) + glycine + H(+). It carries out the reaction a D-aminoacyl-tRNA + H2O = a tRNA + a D-alpha-amino acid + H(+). An aminoacyl-tRNA editing enzyme that deacylates mischarged D-aminoacyl-tRNAs. Also deacylates mischarged glycyl-tRNA(Ala), protecting cells against glycine mischarging by AlaRS. Acts via tRNA-based rather than protein-based catalysis; rejects L-amino acids rather than detecting D-amino acids in the active site. By recycling D-aminoacyl-tRNA to D-amino acids and free tRNA molecules, this enzyme counteracts the toxicity associated with the formation of D-aminoacyl-tRNA entities in vivo and helps enforce protein L-homochirality. This Lactobacillus delbrueckii subsp. bulgaricus (strain ATCC BAA-365 / Lb-18) protein is D-aminoacyl-tRNA deacylase.